The following is a 169-amino-acid chain: S-ribosylhomocysteine lyase (169 aa).

Residues H54, H58, and C128 each coordinate Fe cation.

The protein belongs to the LuxS family. As to quaternary structure, homodimer. Fe cation is required as a cofactor.

The enzyme catalyses S-(5-deoxy-D-ribos-5-yl)-L-homocysteine = (S)-4,5-dihydroxypentane-2,3-dione + L-homocysteine. In terms of biological role, involved in the synthesis of autoinducer 2 (AI-2) which is secreted by bacteria and is used to communicate both the cell density and the metabolic potential of the environment. The regulation of gene expression in response to changes in cell density is called quorum sensing. Catalyzes the transformation of S-ribosylhomocysteine (RHC) to homocysteine (HC) and 4,5-dihydroxy-2,3-pentadione (DPD). The sequence is that of S-ribosylhomocysteine lyase from Aeromonas hydrophila subsp. hydrophila (strain ATCC 7966 / DSM 30187 / BCRC 13018 / CCUG 14551 / JCM 1027 / KCTC 2358 / NCIMB 9240 / NCTC 8049).